The chain runs to 356 residues: D-xylulose reductase (356 aa).

Zn(2+)-binding residues include Cys44, His69, and Glu155. Residue 179–184 (GAGPIG) participates in NAD(+) binding.

This sequence belongs to the zinc-containing alcohol dehydrogenase family. Zn(2+) serves as cofactor.

It carries out the reaction xylitol + NAD(+) = D-xylulose + NADH + H(+). Its pathway is carbohydrate degradation; L-arabinose degradation via L-arabinitol; D-xylulose 5-phosphate from L-arabinose (fungal route): step 4/5. This chain is D-xylulose reductase (XYL2), found in Saccharomyces cerevisiae (strain ATCC 204508 / S288c) (Baker's yeast).